Here is a 317-residue protein sequence, read N- to C-terminus: Thymidylate synthase (317 aa).

DUMP contacts are provided by residues Arg-24 and 179–180 (RR). Catalysis depends on Cys-199, which acts as the Nucleophile. DUMP contacts are provided by residues 219–222 (RSAD), Asn-230, and 260–262 (HIY). (6R)-5,10-methylene-5,6,7,8-tetrahydrofolate is bound at residue Asp-222. Position 316 (Ala-316) interacts with (6R)-5,10-methylene-5,6,7,8-tetrahydrofolate.

This sequence belongs to the thymidylate synthase family. Bacterial-type ThyA subfamily. As to quaternary structure, homodimer.

The protein localises to the cytoplasm. The catalysed reaction is dUMP + (6R)-5,10-methylene-5,6,7,8-tetrahydrofolate = 7,8-dihydrofolate + dTMP. It participates in pyrimidine metabolism; dTTP biosynthesis. In terms of biological role, catalyzes the reductive methylation of 2'-deoxyuridine-5'-monophosphate (dUMP) to 2'-deoxythymidine-5'-monophosphate (dTMP) while utilizing 5,10-methylenetetrahydrofolate (mTHF) as the methyl donor and reductant in the reaction, yielding dihydrofolate (DHF) as a by-product. This enzymatic reaction provides an intracellular de novo source of dTMP, an essential precursor for DNA biosynthesis. This Oceanobacillus iheyensis (strain DSM 14371 / CIP 107618 / JCM 11309 / KCTC 3954 / HTE831) protein is Thymidylate synthase.